The chain runs to 1077 residues: Ubiquitin-activating enzyme E1 2 (1077 aa).

The disordered stretch occupies residues 16–36 (SPMKKRRIDHTESADGSAINA). Residues Ala499, Asp525, Arg536, Lys549, and 597–598 (DN) contribute to the ATP site. Residue Cys653 is the Glycyl thioester intermediate of the active site.

It belongs to the ubiquitin-activating E1 family. Monomer. Expressed in leaves, flowers, roots and stems. Detected in germinating seeds, cotyledons, hypocotyls, vascular tissues, anthers, filaments, pollen, style, stigma, sepals, petals, ovary, developing ovules, funiculi and silique walls.

It catalyses the reaction ATP + ubiquitin + [E1 ubiquitin-activating enzyme]-L-cysteine = AMP + diphosphate + S-ubiquitinyl-[E1 ubiquitin-activating enzyme]-L-cysteine.. Its pathway is protein modification; protein ubiquitination. Its function is as follows. Activates ubiquitin by first adenylating its C-terminal glycine residue with ATP, and thereafter linking this residue to the side chain of a cysteine residue in E1, yielding a ubiquitin-E1 thioester and free AMP. The polypeptide is Ubiquitin-activating enzyme E1 2 (UBA2) (Arabidopsis thaliana (Mouse-ear cress)).